The primary structure comprises 223 residues: Ribonuclease T (223 aa).

Residues 20 to 195 (VVIDVETAGF…YDTERTAELF (176 aa)) form the Exonuclease domain. The Mg(2+) site is built by D23, E25, H182, and D187. H182 acts as the Proton donor/acceptor in catalysis.

It belongs to the RNase T family. Homodimer. The cofactor is Mg(2+).

In terms of biological role, trims short 3' overhangs of a variety of RNA species, leaving a one or two nucleotide 3' overhang. Responsible for the end-turnover of tRNA: specifically removes the terminal AMP residue from uncharged tRNA (tRNA-C-C-A). Also appears to be involved in tRNA biosynthesis. The polypeptide is Ribonuclease T (Photobacterium profundum (strain SS9)).